Here is a 192-residue protein sequence, read N- to C-terminus: Putative B3 domain-containing protein At4g03160 (192 aa).

Residues 22–44 (VFFDQEEEEEDEEEEYDEESVCE) are disordered. Acidic residues predominate over residues 25–44 (DQEEEEEDEEEEYDEESVCE). The segment at residues 75-173 (KDNQYRLMLG…EICFAIDSTR (99 aa)) is a DNA-binding region (TF-B3).

The protein localises to the nucleus. The chain is Putative B3 domain-containing protein At4g03160 from Arabidopsis thaliana (Mouse-ear cress).